The chain runs to 229 residues: Ribonuclease 3 (229 aa).

The region spanning 5–127 (LARLERKLGY…LIGAIYLDAD (123 aa)) is the RNase III domain. Position 40 (E40) interacts with Mg(2+). Residue D44 is part of the active site. Mg(2+) contacts are provided by D113 and E116. E116 is a catalytic residue. The DRBM domain maps to 154–224 (DPKTRLQEFL…AAAALIALGV (71 aa)).

This sequence belongs to the ribonuclease III family. As to quaternary structure, homodimer. Requires Mg(2+) as cofactor.

The protein localises to the cytoplasm. The enzyme catalyses Endonucleolytic cleavage to 5'-phosphomonoester.. In terms of biological role, digests double-stranded RNA. Involved in the processing of primary rRNA transcript to yield the immediate precursors to the large and small rRNAs (23S and 16S). Processes some mRNAs, and tRNAs when they are encoded in the rRNA operon. Processes pre-crRNA and tracrRNA of type II CRISPR loci if present in the organism. In Pseudomonas putida (strain W619), this protein is Ribonuclease 3.